A 99-amino-acid polypeptide reads, in one-letter code: Aspartyl/glutamyl-tRNA(Asn/Gln) amidotransferase subunit C (99 aa).

It belongs to the GatC family. Heterotrimer of A, B and C subunits.

The enzyme catalyses L-glutamyl-tRNA(Gln) + L-glutamine + ATP + H2O = L-glutaminyl-tRNA(Gln) + L-glutamate + ADP + phosphate + H(+). The catalysed reaction is L-aspartyl-tRNA(Asn) + L-glutamine + ATP + H2O = L-asparaginyl-tRNA(Asn) + L-glutamate + ADP + phosphate + 2 H(+). Its function is as follows. Allows the formation of correctly charged Asn-tRNA(Asn) or Gln-tRNA(Gln) through the transamidation of misacylated Asp-tRNA(Asn) or Glu-tRNA(Gln) in organisms which lack either or both of asparaginyl-tRNA or glutaminyl-tRNA synthetases. The reaction takes place in the presence of glutamine and ATP through an activated phospho-Asp-tRNA(Asn) or phospho-Glu-tRNA(Gln). The sequence is that of Aspartyl/glutamyl-tRNA(Asn/Gln) amidotransferase subunit C from Cupriavidus taiwanensis (strain DSM 17343 / BCRC 17206 / CCUG 44338 / CIP 107171 / LMG 19424 / R1) (Ralstonia taiwanensis (strain LMG 19424)).